The chain runs to 376 residues: MADYWKSQPKKFCDYCKCWIADNRPSVEFHERGKNHKENVAKRISEIKQKSLDKAKEEEKASKEFAAMEAAALKAYQEDLKRLGLESEILEPSITPVTSTIPPTSTSNQQKEKKEKKKRKKDPSKGRWVEGITSEGYHYYYDLISGASQWEKPEGFQGDLKKTAVKTVWVEGLSEDGFTYYYNTETGESRWEKPDDFIPHTSDLPSSKVNENSLGTLDESKSSDSHSDSDGEQEAEEGGVSTETEKPKIKFKEKNKNSDGGSDPETQKEKSIQKQNSLGSNEEKSKTLKKSNPYGEWQEIKQEVESHEEVDLELPSTENEYVSTSEADGGGEPKVVFKEKTVTSLGVMADGVAPVFKKRRTENGKSRNLRQRGDDQ.

Residues 11 to 42 form a Matrin-type zinc finger; that stretch reads KFCDYCKCWIADNRPSVEFHERGKNHKENVAK. The span at 94–107 shows a compositional bias: low complexity; the sequence is ITPVTSTIPPTSTS. Disordered stretches follow at residues 94 to 128, 189 to 335, and 356 to 376; these read ITPV…KGRW, SRWE…EPKV, and FKKR…GDDQ. WW domains lie at 122 to 155 and 163 to 196; these read DPSK…KPEG and TAVK…KPDD. Basic and acidic residues predominate over residues 189–198; that stretch reads SRWEKPDDFI. A compositionally biased stretch (polar residues) spans 203–215; it reads DLPSSKVNENSLG. 2 stretches are compositionally biased toward basic and acidic residues: residues 218 to 229 and 243 to 257; these read DESKSSDSHSDS and ETEK…KNKN. Phosphoserine occurs at positions 220, 227, and 229. S262 is modified (phosphoserine). Over residues 298-309 the composition is skewed to basic and acidic residues; sequence QEIKQEVESHEE. The segment covering 316-326 has biased composition (polar residues); that stretch reads STENEYVSTSE. The interaction with SNRNP200 stretch occupies residues 357–375; it reads KKRRTENGKSRNLRQRGDD. Basic and acidic residues predominate over residues 361-376; it reads TENGKSRNLRQRGDDQ.

As to quaternary structure, component of the spliceosome B complex. Associated with U2 snRNPs. Binds splicing factors SNRPB, SNRPC and SF1. Interacts via the WW domains with the Pro-rich domains of KHDRBS1/SAM68. Interacts via the WW domains with the Pro-rich domains of WBP11. Interacts with SNRNP200.

It is found in the nucleus. Its subcellular location is the nucleus speckle. Functionally, involved in pre-mRNA splicing as a component of the spliceosome. May play a role in cross-intron bridging of U1 and U2 snRNPs in the mammalian A complex. The sequence is that of WW domain-binding protein 4 (WBP4) from Homo sapiens (Human).